Reading from the N-terminus, the 455-residue chain is uncharacterized protein (455 aa).

Transmembrane regions (helical) follow at residues 19–39 (FSLF…MFMG), 63–83 (ILNL…VIIS), 106–126 (FFIS…LLHM), 140–160 (FLQV…FSAI), 173–195 (VTIG…LFGF), 200–222 (VAGV…IVIV), 265–285 (MIVT…KVYT), 288–308 (ITMF…ILIG), 324–344 (MKSL…MTIF), 348–368 (LIGL…LIAM), 388–408 (AAGD…GIGL), and 410–430 (LAYL…ISFI).

This sequence belongs to the multi antimicrobial extrusion (MATE) (TC 2.A.66.1) family.

It localises to the cell membrane. This is an uncharacterized protein from Bacillus subtilis (strain 168).